Consider the following 299-residue polypeptide: ATP phosphoribosyltransferase (299 aa).

This sequence belongs to the ATP phosphoribosyltransferase family. Long subfamily. Requires Mg(2+) as cofactor.

It localises to the cytoplasm. It catalyses the reaction 1-(5-phospho-beta-D-ribosyl)-ATP + diphosphate = 5-phospho-alpha-D-ribose 1-diphosphate + ATP. Its pathway is amino-acid biosynthesis; L-histidine biosynthesis; L-histidine from 5-phospho-alpha-D-ribose 1-diphosphate: step 1/9. Feedback inhibited by histidine. Its function is as follows. Catalyzes the condensation of ATP and 5-phosphoribose 1-diphosphate to form N'-(5'-phosphoribosyl)-ATP (PR-ATP). Has a crucial role in the pathway because the rate of histidine biosynthesis seems to be controlled primarily by regulation of HisG enzymatic activity. This chain is ATP phosphoribosyltransferase, found in Campylobacter jejuni subsp. doylei (strain ATCC BAA-1458 / RM4099 / 269.97).